A 440-amino-acid chain; its full sequence is Xaa-Pro dipeptidase (440 aa).

Mn(2+) contacts are provided by Asp-246, Asp-257, His-337, Glu-382, and Glu-421.

This sequence belongs to the peptidase M24B family. Bacterial-type prolidase subfamily. It depends on Mn(2+) as a cofactor.

It carries out the reaction Xaa-L-Pro dipeptide + H2O = an L-alpha-amino acid + L-proline. Splits dipeptides with a prolyl residue in the C-terminal position. The chain is Xaa-Pro dipeptidase from Aeromonas hydrophila subsp. hydrophila (strain ATCC 7966 / DSM 30187 / BCRC 13018 / CCUG 14551 / JCM 1027 / KCTC 2358 / NCIMB 9240 / NCTC 8049).